Here is a 286-residue protein sequence, read N- to C-terminus: Ribose-phosphate pyrophosphokinase (286 aa).

ATP contacts are provided by residues 34 to 36 and 91 to 92; these read DGE and RQ. 2 residues coordinate Mg(2+): H124 and D161. K184 is a catalytic residue. Residues R186, D210, and 214 to 218 contribute to the D-ribose 5-phosphate site; that span reads STGGT.

The protein belongs to the ribose-phosphate pyrophosphokinase family. Class III (archaeal) subfamily. Mg(2+) is required as a cofactor.

It localises to the cytoplasm. It catalyses the reaction D-ribose 5-phosphate + ATP = 5-phospho-alpha-D-ribose 1-diphosphate + AMP + H(+). The protein operates within metabolic intermediate biosynthesis; 5-phospho-alpha-D-ribose 1-diphosphate biosynthesis; 5-phospho-alpha-D-ribose 1-diphosphate from D-ribose 5-phosphate (route I): step 1/1. Involved in the biosynthesis of the central metabolite phospho-alpha-D-ribosyl-1-pyrophosphate (PRPP) via the transfer of pyrophosphoryl group from ATP to 1-hydroxyl of ribose-5-phosphate (Rib-5-P). The polypeptide is Ribose-phosphate pyrophosphokinase (Thermoplasma acidophilum (strain ATCC 25905 / DSM 1728 / JCM 9062 / NBRC 15155 / AMRC-C165)).